A 333-amino-acid chain; its full sequence is Fibronectin type III domain-containing protein 11 (333 aa).

The 99-residue stretch at 212–310 (PVMFDRKESV…DSLTLHTRPG (99 aa)) folds into the Fibronectin type-III domain. Residues 307–333 (TRPGPPEGLAPSRLGKLGLSLTTPSER) are disordered.

The sequence is that of Fibronectin type III domain-containing protein 11 from Bos taurus (Bovine).